Here is a 182-residue protein sequence, read N- to C-terminus: Translation initiation factor IF-3 (182 aa).

Belongs to the IF-3 family. Monomer.

The protein localises to the cytoplasm. Its function is as follows. IF-3 binds to the 30S ribosomal subunit and shifts the equilibrium between 70S ribosomes and their 50S and 30S subunits in favor of the free subunits, thus enhancing the availability of 30S subunits on which protein synthesis initiation begins. The protein is Translation initiation factor IF-3 of Thermosynechococcus vestitus (strain NIES-2133 / IAM M-273 / BP-1).